A 232-amino-acid chain; its full sequence is Phosphatidylserine decarboxylase proenzyme (232 aa).

The active-site Schiff-base intermediate with substrate; via pyruvic acid is the S190. Residue S190 is modified to Pyruvic acid (Ser); by autocatalysis.

It belongs to the phosphatidylserine decarboxylase family. PSD-A subfamily. Heterodimer of a large membrane-associated beta subunit and a small pyruvoyl-containing alpha subunit. The cofactor is pyruvate. Is synthesized initially as an inactive proenzyme. Formation of the active enzyme involves a self-maturation process in which the active site pyruvoyl group is generated from an internal serine residue via an autocatalytic post-translational modification. Two non-identical subunits are generated from the proenzyme in this reaction, and the pyruvate is formed at the N-terminus of the alpha chain, which is derived from the carboxyl end of the proenzyme. The post-translation cleavage follows an unusual pathway, termed non-hydrolytic serinolysis, in which the side chain hydroxyl group of the serine supplies its oxygen atom to form the C-terminus of the beta chain, while the remainder of the serine residue undergoes an oxidative deamination to produce ammonia and the pyruvoyl prosthetic group on the alpha chain.

Its subcellular location is the cell membrane. The enzyme catalyses a 1,2-diacyl-sn-glycero-3-phospho-L-serine + H(+) = a 1,2-diacyl-sn-glycero-3-phosphoethanolamine + CO2. It functions in the pathway phospholipid metabolism; phosphatidylethanolamine biosynthesis; phosphatidylethanolamine from CDP-diacylglycerol: step 2/2. In terms of biological role, catalyzes the formation of phosphatidylethanolamine (PtdEtn) from phosphatidylserine (PtdSer). This chain is Phosphatidylserine decarboxylase proenzyme, found in Cereibacter sphaeroides (strain ATCC 17023 / DSM 158 / JCM 6121 / CCUG 31486 / LMG 2827 / NBRC 12203 / NCIMB 8253 / ATH 2.4.1.) (Rhodobacter sphaeroides).